The primary structure comprises 79 residues: Small ribosomal subunit protein bS16c (79 aa).

It belongs to the bacterial ribosomal protein bS16 family.

It is found in the plastid. The protein resides in the chloroplast. The protein is Small ribosomal subunit protein bS16c of Trieres chinensis (Marine centric diatom).